We begin with the raw amino-acid sequence, 345 residues long: Holliday junction branch migration complex subunit RuvB (345 aa).

The segment at 4–185 (LDNRFVTPLS…FGVLCPMEFY (182 aa)) is large ATPase domain (RuvB-L). ATP-binding positions include Leu-24, Arg-25, Gly-66, Lys-69, Thr-70, Thr-71, 132–134 (EDY), Arg-175, Tyr-185, and Arg-222. Thr-70 is a Mg(2+) binding site. Residues 186-256 (NEEELKDIIV…MTNKALNLLE (71 aa)) form a small ATPAse domain (RuvB-S) region. Positions 259-345 (KEGFDSIDTK…ENINQYKFKI (87 aa)) are head domain (RuvB-H). Residues Arg-314 and Arg-319 each coordinate DNA.

It belongs to the RuvB family. As to quaternary structure, homohexamer. Forms an RuvA(8)-RuvB(12)-Holliday junction (HJ) complex. HJ DNA is sandwiched between 2 RuvA tetramers; dsDNA enters through RuvA and exits via RuvB. An RuvB hexamer assembles on each DNA strand where it exits the tetramer. Each RuvB hexamer is contacted by two RuvA subunits (via domain III) on 2 adjacent RuvB subunits; this complex drives branch migration. In the full resolvosome a probable DNA-RuvA(4)-RuvB(12)-RuvC(2) complex forms which resolves the HJ.

It localises to the cytoplasm. The enzyme catalyses ATP + H2O = ADP + phosphate + H(+). Its function is as follows. The RuvA-RuvB-RuvC complex processes Holliday junction (HJ) DNA during genetic recombination and DNA repair, while the RuvA-RuvB complex plays an important role in the rescue of blocked DNA replication forks via replication fork reversal (RFR). RuvA specifically binds to HJ cruciform DNA, conferring on it an open structure. The RuvB hexamer acts as an ATP-dependent pump, pulling dsDNA into and through the RuvAB complex. RuvB forms 2 homohexamers on either side of HJ DNA bound by 1 or 2 RuvA tetramers; 4 subunits per hexamer contact DNA at a time. Coordinated motions by a converter formed by DNA-disengaged RuvB subunits stimulates ATP hydrolysis and nucleotide exchange. Immobilization of the converter enables RuvB to convert the ATP-contained energy into a lever motion, pulling 2 nucleotides of DNA out of the RuvA tetramer per ATP hydrolyzed, thus driving DNA branch migration. The RuvB motors rotate together with the DNA substrate, which together with the progressing nucleotide cycle form the mechanistic basis for DNA recombination by continuous HJ branch migration. Branch migration allows RuvC to scan DNA until it finds its consensus sequence, where it cleaves and resolves cruciform DNA. The protein is Holliday junction branch migration complex subunit RuvB of Clostridium tetani (strain Massachusetts / E88).